A 638-amino-acid chain; its full sequence is MTNSSPRVKRRTDTQYLHSVSSKLPKVDFDTNNEEFFEEEFEIYDPFYRAELPCPKPSLSISKHSIAKVPSNVNKRLELQLLLTSGTFLPNSRPYLSERVRKHTHLLSNSITGDDKPSLIHVDFTPEECFILQEAKLKFGPVNSVQFNDAYSTHISPKLPGRAYEDCQKFEIDNPSLSPVDKHGAIILRTYKKNKKLLPDYLKSFYNAGSSYFQREQVHQLMDGESVFFLKPWKHFNETSGDTVCVAYNPLCEKFALGSTAQDGAYNRLGNLWIGDFHSETIQSLESHYKLNQVGEKEYSTISDLCFSKGNLFLYTGAFDNAVKVWDMEGNLCGIFNAPTDYIHKLALSDDDLLAVACKNGYGYLLSTDNSTGEILTSANLIYPEALEKGYSASLIEFSNFLGRSSDKVIIGYDSFHTSNNRGCLALFDASTASFVQKFNTADEAFTSLYMHPSQVGFVASSNTLSNGRVYYLDTRMYKVCLNFTTTQKDINHATISNSGILVTSSGTDNQTFVWDSRKPDKPLSLLKHGKTKMIHFDGANEEEVDAGINMAQWQPKGNLFVTGGSDGIVKVWDLRLNNPFIQNFTEMNSAITYGGFSEDASKLTVCCVGGDVNMYSLGNDNGNKFGEFRIIENRLLT.

WD repeat units lie at residues 297 to 336 (KEYS…CGIF), 486 to 525 (TTQK…KPLS), 544 to 583 (EVDA…PFIQ), and 587 to 626 (EMNS…GNKF).

Component of the Clr4 methyltransferase complex (ClrC) composed of at least clr4, rik1, pcu4, rbx1, raf1 and raf2. The cullin pcu4, rik1, raf1, raf2 and the ring-box protein rbx1 are components of an E3 ubiquitin ligase, whose activity is essential for heterochromatin assembly. Interacts with nup189.

Its subcellular location is the cytoplasm. It localises to the nucleus. The protein localises to the chromosome. Component of the Clr4 methyltransferase complex (ClrC) which contributes to the establishment of heterochromatin by specifically methylating histone H3 to form H3K9me. ClrC preferentially ubiquitylates H3K14 and ClrC-mediated H3 ubiquitination promotes clr4 methyltransferase activity for the methylation of H3K9. H3K9me represents a specific tag for epigenetic transcriptional repression by recruiting swi6/HP1 to methylated histones which leads to transcriptional silencing within centromeric heterochromatin, telomeric regions and at the silent mating-type loci. Has a role in both mitotic and meiotic chromosome segregation. This is Rik1-associated factor 1 (raf1) from Schizosaccharomyces pombe (strain 972 / ATCC 24843) (Fission yeast).